The following is a 425-amino-acid chain: Protein CLP1 homolog (425 aa).

Residues Glu-18, Lys-59, and Asp-121–Thr-126 contribute to the ATP site.

Belongs to the Clp1 family. Clp1 subfamily.

The protein resides in the nucleus. In terms of biological role, required for endonucleolytic cleavage during polyadenylation-dependent pre-mRNA 3'-end formation. This chain is Protein CLP1 homolog (cbc), found in Drosophila mojavensis (Fruit fly).